The chain runs to 391 residues: Cathepsin E (391 aa).

The signal sequence occupies residues 1 to 19; the sequence is MKTFLLLLLVLLELGQAPG. Residues 20 to 53 constitute a propeptide, activation peptide; it reads ALHRVPLSRRESLRKKLRAQGQLTELWKSQNLNM. The 314-residue stretch at 74–387 folds into the Peptidase A1 domain; that stretch reads YFGTISIGSP…DRGNNRVGLA (314 aa). Residue N86 is glycosylated (N-linked (GlcNAc...) asparagine). The active site involves D92. 2 disulfides stabilise this stretch: C105–C110 and C267–C271. D276 is a catalytic residue. C309 and C346 are disulfide-bonded.

The protein belongs to the peptidase A1 family. As to quaternary structure, homodimer; disulfide-linked. In terms of processing, glycosylated. The nature of the carbohydrate chain varies between cell types. As to expression, expressed abundantly in the surface and foveolar epithelial cells of the fundic and pyloric stomach mucosa, and at very low levels in the spleen.

It is found in the endosome. The catalysed reaction is Similar to cathepsin D, but slightly broader specificity.. Its function is as follows. May have a role in immune function. Probably involved in the processing of antigenic peptides during MHC class II-mediated antigen presentation. May play a role in activation-induced lymphocyte depletion in the thymus, and in neuronal degeneration and glial cell activation in the brain. The sequence is that of Cathepsin E (CTSE) from Cavia porcellus (Guinea pig).